Here is a 249-residue protein sequence, read N- to C-terminus: Segregation and condensation protein A (249 aa).

This sequence belongs to the ScpA family. In terms of assembly, component of a cohesin-like complex composed of ScpA, ScpB and the Smc homodimer, in which ScpA and ScpB bind to the head domain of Smc. The presence of the three proteins is required for the association of the complex with DNA.

The protein resides in the cytoplasm. Participates in chromosomal partition during cell division. May act via the formation of a condensin-like complex containing Smc and ScpB that pull DNA away from mid-cell into both cell halves. The chain is Segregation and condensation protein A from Clostridium acetobutylicum (strain ATCC 824 / DSM 792 / JCM 1419 / IAM 19013 / LMG 5710 / NBRC 13948 / NRRL B-527 / VKM B-1787 / 2291 / W).